Reading from the N-terminus, the 926-residue chain is Up-regulator of cell proliferation (926 aa).

The residue at position 3 (Ser-3) is a Phosphoserine. Residues 689 to 924 (RSRLVVLSAL…NIQQLIELLR (236 aa)) form the VLIG-type G domain.

The protein belongs to the TRAFAC class dynamin-like GTPase superfamily. Very large inducible GTPase (VLIG) family.

It localises to the cytoplasm. The protein resides in the nucleus. May be involved in cell cycle progression through the regulation of cyclin D1 expression. This Mus musculus (Mouse) protein is Up-regulator of cell proliferation (Urgcp).